A 226-amino-acid polypeptide reads, in one-letter code: Lipoprotein-releasing system ATP-binding protein LolD (226 aa).

Positions 5–226 constitute an ABC transporter domain; the sequence is LKATNINKIY…LLRNGHWENY (222 aa). 41–48 is a binding site for ATP; it reads GTSGSGKS.

This sequence belongs to the ABC transporter superfamily. Lipoprotein translocase (TC 3.A.1.125) family. As to quaternary structure, the complex is composed of two ATP-binding proteins (LolD) and two transmembrane proteins (LolC and LolE).

It localises to the cell inner membrane. In terms of biological role, part of the ABC transporter complex LolCDE involved in the translocation of mature outer membrane-directed lipoproteins, from the inner membrane to the periplasmic chaperone, LolA. Responsible for the formation of the LolA-lipoprotein complex in an ATP-dependent manner. The sequence is that of Lipoprotein-releasing system ATP-binding protein LolD from Psychrobacter arcticus (strain DSM 17307 / VKM B-2377 / 273-4).